The chain runs to 270 residues: Urease accessory protein UreD (270 aa).

This sequence belongs to the UreD family. As to quaternary structure, ureD, UreF and UreG form a complex that acts as a GTP-hydrolysis-dependent molecular chaperone, activating the urease apoprotein by helping to assemble the nickel containing metallocenter of UreC. The UreE protein probably delivers the nickel.

It localises to the cytoplasm. Required for maturation of urease via the functional incorporation of the urease nickel metallocenter. The chain is Urease accessory protein UreD from Actinobacillus pleuropneumoniae serotype 3 (strain JL03).